A 475-amino-acid chain; its full sequence is ATP synthase subunit beta 1 (475 aa).

G152–T159 contacts ATP.

The protein belongs to the ATPase alpha/beta chains family. As to quaternary structure, F-type ATPases have 2 components, CF(1) - the catalytic core - and CF(0) - the membrane proton channel. CF(1) has five subunits: alpha(3), beta(3), gamma(1), delta(1), epsilon(1). CF(0) has four main subunits: a(1), b(1), b'(1) and c(9-12).

It localises to the cell inner membrane. It carries out the reaction ATP + H2O + 4 H(+)(in) = ADP + phosphate + 5 H(+)(out). Its function is as follows. Produces ATP from ADP in the presence of a proton gradient across the membrane. The catalytic sites are hosted primarily by the beta subunits. In Cereibacter sphaeroides (strain ATCC 17029 / ATH 2.4.9) (Rhodobacter sphaeroides), this protein is ATP synthase subunit beta 1.